The following is a 430-amino-acid chain: Adenylosuccinate synthetase (430 aa).

Residues 12-18 (GDEGKGK) and 40-42 (GHT) contribute to the GTP site. Asp13 (proton acceptor) is an active-site residue. The Mg(2+) site is built by Asp13 and Gly40. Residues 13–16 (DEGK), 38–41 (NAGH), Thr128, Arg142, Gln223, Thr238, and Arg302 each bind IMP. The active-site Proton donor is the His41. Substrate is bound at residue 298–304 (TTTGRPR). GTP-binding positions include Arg304, 330–332 (SID), and 412–414 (SVG).

Belongs to the adenylosuccinate synthetase family. In terms of assembly, homodimer. The cofactor is Mg(2+).

Its subcellular location is the cytoplasm. It catalyses the reaction IMP + L-aspartate + GTP = N(6)-(1,2-dicarboxyethyl)-AMP + GDP + phosphate + 2 H(+). The protein operates within purine metabolism; AMP biosynthesis via de novo pathway; AMP from IMP: step 1/2. Its function is as follows. Plays an important role in the de novo pathway of purine nucleotide biosynthesis. Catalyzes the first committed step in the biosynthesis of AMP from IMP. This is Adenylosuccinate synthetase from Enterococcus faecalis (strain ATCC 700802 / V583).